The sequence spans 339 residues: MALAQQLRSESDFEQLPDDVAVSANIADIEEKRGFTSHFVFVIEVKTKGGSKYLIYRRYRQFYALQSKLEERFGPESKNSPFTCSLPTLPAKVYMGAKQEIAETRIPALNAYMKNLLSLPVCVLMDPDVRIFFYQSAYDAEQVPQALRRLRPRTRKIKGVSPQGAIMDRMEAPRAEALFDFTGNSKLELSFKAGDVIFLLSKINKDWLEGTSQGATGIFPGSFVKILKDFPEDEDTTNWLRCYFYEDTGKTIKDIAVEEDLSSTPLFKDLLALMRREFQREDIALSYQDAEGDLVRLLSDEDVGLMVKQARGLPSQKRLFPWKLHVTQKDNYSVYNTVP.

The region spanning 19–140 (DVAVSANIAD…IFFYQSAYDA (122 aa)) is the PX domain. A 1,2-diacyl-sn-glycero-3-phospho-(1D-myo-inositol-3-phosphate) contacts are provided by residues 58-60 (RYR) and 92-94 (KVY). Thr154 is subject to Phosphothreonine. Residues 170–229 (MEAPRAEALFDFTGNSKLELSFKAGDVIFLLSKINKDWLEGTSQGATGIFPGSFVKILKD) enclose the SH3 domain. Positions 237–329 (TNWLRCYFYE…FPWKLHVTQK (93 aa)) constitute a PB1 domain. Residue Ser315 is modified to Phosphoserine.

Component of the phagocyte NADPH oxidase complex composed of an obligatory core heterodimer formed by the membrane proteins CYBA and CYBB and the cytosolic regulatory subunits NCF1/p47-phox, NCF2/p67-phox, NCF4/p40-phox and the small GTPase RAC1 or RAC2. Part of a cytosolic complex composed at least by NCF1, NCF2 and NCF4. Interacts with NCF2. Interacts with NCF1. The NCF2-NCF4 complex interacts with GBP7 (via GB1/RHD3-type G domain).

It is found in the cytoplasm. The protein resides in the cytosol. It localises to the endosome membrane. The protein localises to the membrane. In terms of biological role, subunit of the phagocyte NADPH oxidase complex that mediates the transfer of electrons from cytosolic NADPH to O2 to produce the superoxide anion (O2(-)). In the activated complex, electrons are first transferred from NADPH to flavin adenine dinucleotide (FAD) and subsequently transferred via two heme molecules to molecular oxygen, producing superoxide through an outer-sphere reaction. Activation of the NADPH oxidase complex is initiated by the assembly of cytosolic subunits of the NADPH oxidase complex with the core NADPH oxidase complex to form a complex at the plasma membrane or phagosomal membrane. This activation process is initiated by phosphorylation dependent binding of the cytosolic NCF1/p47-phox subunit to the C-terminus of CYBA/p22-phox. The polypeptide is Neutrophil cytosol factor 4 (Mus musculus (Mouse)).